We begin with the raw amino-acid sequence, 369 residues long: Putative cyclin-F1-1 (369 aa).

The interval 328–350 (AQHHLESKPAGAAGVGINSSGDD) is disordered.

Belongs to the cyclin family. Cyclin F subfamily.

The chain is Putative cyclin-F1-1 (CYCF1-1) from Oryza sativa subsp. japonica (Rice).